The sequence spans 239 residues: MIENQSDNIDNKEIDVSIQDNAPEDKSSMQNSTTENDELSSQKTEEINTEELKNTISNNDARLEQLEKEHETLKNQYVRISADFDNFRKRQSRDQDDLKIQLVSKTLTAILPIVDNFERARQQLKPESEEAQALHRSYQGLYKQLVEVLKQQGVSPMRVVGQQFDPNLHEAVLREPSEEFEEDFIIEELQRGYHLEGKVLRHALAKVSMGPGKQKSQQEVEKDTVEGDVDSDANTSEDV.

2 disordered regions span residues 1–60 (MIEN…SNND) and 208–239 (SMGP…SEDV). Residues 28–42 (SMQNSTTENDELSSQ) show a composition bias toward polar residues. 2 stretches are compositionally biased toward basic and acidic residues: residues 43–53 (KTEEINTEELK) and 216–225 (SQQEVEKDTV). Residues 226–239 (EGDVDSDANTSEDV) are compositionally biased toward acidic residues.

It belongs to the GrpE family. As to quaternary structure, homodimer.

It is found in the cytoplasm. Its function is as follows. Participates actively in the response to hyperosmotic and heat shock by preventing the aggregation of stress-denatured proteins, in association with DnaK and GrpE. It is the nucleotide exchange factor for DnaK and may function as a thermosensor. Unfolded proteins bind initially to DnaJ; upon interaction with the DnaJ-bound protein, DnaK hydrolyzes its bound ATP, resulting in the formation of a stable complex. GrpE releases ADP from DnaK; ATP binding to DnaK triggers the release of the substrate protein, thus completing the reaction cycle. Several rounds of ATP-dependent interactions between DnaJ, DnaK and GrpE are required for fully efficient folding. The sequence is that of Protein GrpE from Prochlorococcus marinus (strain MIT 9301).